A 184-amino-acid polypeptide reads, in one-letter code: ATP synthase subunit b (184 aa).

Residues 25–45 (IFPSWPIMLATLVSFTILLVV) traverse the membrane as a helical segment.

Belongs to the ATPase B chain family. F-type ATPases have 2 components, F(1) - the catalytic core - and F(0) - the membrane proton channel. F(1) has five subunits: alpha(3), beta(3), gamma(1), delta(1), epsilon(1). F(0) has three main subunits: a(1), b(2) and c(10-14). The alpha and beta chains form an alternating ring which encloses part of the gamma chain. F(1) is attached to F(0) by a central stalk formed by the gamma and epsilon chains, while a peripheral stalk is formed by the delta and b chains.

It is found in the cell membrane. In terms of biological role, f(1)F(0) ATP synthase produces ATP from ADP in the presence of a proton or sodium gradient. F-type ATPases consist of two structural domains, F(1) containing the extramembraneous catalytic core and F(0) containing the membrane proton channel, linked together by a central stalk and a peripheral stalk. During catalysis, ATP synthesis in the catalytic domain of F(1) is coupled via a rotary mechanism of the central stalk subunits to proton translocation. Functionally, component of the F(0) channel, it forms part of the peripheral stalk, linking F(1) to F(0). This is ATP synthase subunit b from Mycoplasma mobile (strain ATCC 43663 / 163K / NCTC 11711) (Mesomycoplasma mobile).